A 261-amino-acid chain; its full sequence is MTDSAKPQNPDPGHESRRVAPLAGSPRSPFLIEFPEDSFTAVFLGREKRFLVEAERNGHLFQAHCNNSGSMLGLLRPGSDILLSVSPNPSRRLPYTLESIKLGSHWVGVNTLVPNRILRLAWDRGILPELIGYDRFQNEKTSGESRLDAFAEGPAGQVWIEAKNVTLVEDDVACFPDAVTVRGQKHMRELTALARAGRRAACFFLVQRPDASCFAPADFIDPVYAELFHAAVHAGVEIWPYEAVVTRQGIALGRRLKVVGH.

Residues 1–23 (MTDSAKPQNPDPGHESRRVAPLA) form a disordered region.

It belongs to the SfsA family.

The protein is Sugar fermentation stimulation protein homolog of Syntrophobacter fumaroxidans (strain DSM 10017 / MPOB).